Consider the following 378-residue polypeptide: Conserved oligomeric Golgi complex subunit 8 (378 aa).

The protein belongs to the COG8 family. As to quaternary structure, component of the conserved oligomeric Golgi complex which is composed of eight different subunits and is required for normal Golgi morphology and localization.

Its subcellular location is the golgi apparatus membrane. Required for normal Golgi function. The protein is Conserved oligomeric Golgi complex subunit 8 (cog8) of Schizosaccharomyces pombe (strain 972 / ATCC 24843) (Fission yeast).